Reading from the N-terminus, the 257-residue chain is Snake venom serine protease salmonase (257 aa).

The signal sequence occupies residues 1–18; it reads MVLIRVLVNFLILQLSYA. Positions 19 to 24 are excised as a propeptide; that stretch reads QKSSEL. One can recognise a Peptidase S1 domain in the interval 25-248; sequence VIGGDECNIN…YIDWIQSIIA (224 aa). Intrachain disulfides connect Cys-31-Cys-162, Cys-49-Cys-65, Cys-141-Cys-209, Cys-173-Cys-188, and Cys-199-Cys-224. His-64 (charge relay system) is an active-site residue. A glycan (N-linked (GlcNAc...) asparagine) is linked at Asn-78. Asp-109 (charge relay system) is an active-site residue. The Charge relay system role is filled by Ser-203.

Belongs to the peptidase S1 family. Snake venom subfamily. As to quaternary structure, monomer. As to expression, expressed by the venom gland.

The protein resides in the secreted. Functionally, snake venom serine protease that may act in the hemostasis system of the prey. The chain is Snake venom serine protease salmonase from Gloydius brevicauda (Korean slamosa snake).